We begin with the raw amino-acid sequence, 392 residues long: GTPase Obg (392 aa).

The region spanning 1-159 (MKFVDEATIK…RELRLELLLL (159 aa)) is the Obg domain. The OBG-type G domain maps to 160–333 (ADVGMLGLPN…VCNELSDFMD (174 aa)). Residues 166–173 (GLPNAGKS), 191–195 (FTTLI), 213–216 (DIPG), 283–286 (NKTD), and 314–316 (AAV) each bind GTP. Mg(2+) is bound by residues Ser173 and Thr193. Residues 364 to 392 (GKNVVTEDGDDDDDWDDEEDDGHVIYARD) form a disordered region. Positions 370–384 (EDGDDDDDWDDEEDD) are enriched in acidic residues.

Belongs to the TRAFAC class OBG-HflX-like GTPase superfamily. OBG GTPase family. In terms of assembly, monomer. Requires Mg(2+) as cofactor.

It localises to the cytoplasm. In terms of biological role, an essential GTPase which binds GTP, GDP and possibly (p)ppGpp with moderate affinity, with high nucleotide exchange rates and a fairly low GTP hydrolysis rate. Plays a role in control of the cell cycle, stress response, ribosome biogenesis and in those bacteria that undergo differentiation, in morphogenesis control. The protein is GTPase Obg of Aliivibrio salmonicida (strain LFI1238) (Vibrio salmonicida (strain LFI1238)).